Reading from the N-terminus, the 108-residue chain is Ig kappa chain V region GOM (108 aa).

A framework-1 region spans residues 1–23 (DIVMTQTPLSLSVSPGEPASISC). A disulfide bridge connects residues C23 and C88. The segment at 24–34 (RSSQSNLDYLN) is complementarity-determining-1. The framework-2 stretch occupies residues 35–49 (WYLQKAGQSPRLLPE). Residues 44 to 66 (PRLLPEQDSQRASGVPDRFSGSG) form a disordered region. The complementarity-determining-2 stretch occupies residues 50 to 56 (QDSQRAS). Residues 57–88 (GVPDRFSGSGSGTDFTLRIGRVEAEDAGIYYC) are framework-3. The interval 89–97 (MQRSFYPYT) is complementarity-determining-3. Residues 98–107 (FGQGTRLEVR) are framework-4.

This is Ig kappa chain V region GOM from Canis lupus familiaris (Dog).